A 268-amino-acid polypeptide reads, in one-letter code: 4-hydroxy-tetrahydrodipicolinate reductase (268 aa).

7–12 (GANGRM) contacts NAD(+). Arg-34 is an NADP(+) binding site. Residues 97 to 99 (GTT) and 121 to 124 (SENM) contribute to the NAD(+) site. The active-site Proton donor/acceptor is the His-155. His-156 is a binding site for (S)-2,3,4,5-tetrahydrodipicolinate. Lys-159 (proton donor) is an active-site residue. 165–166 (GT) serves as a coordination point for (S)-2,3,4,5-tetrahydrodipicolinate.

Belongs to the DapB family.

The protein resides in the cytoplasm. The enzyme catalyses (S)-2,3,4,5-tetrahydrodipicolinate + NAD(+) + H2O = (2S,4S)-4-hydroxy-2,3,4,5-tetrahydrodipicolinate + NADH + H(+). It catalyses the reaction (S)-2,3,4,5-tetrahydrodipicolinate + NADP(+) + H2O = (2S,4S)-4-hydroxy-2,3,4,5-tetrahydrodipicolinate + NADPH + H(+). It functions in the pathway amino-acid biosynthesis; L-lysine biosynthesis via DAP pathway; (S)-tetrahydrodipicolinate from L-aspartate: step 4/4. In terms of biological role, catalyzes the conversion of 4-hydroxy-tetrahydrodipicolinate (HTPA) to tetrahydrodipicolinate. In Bartonella bacilliformis (strain ATCC 35685 / KC583 / Herrer 020/F12,63), this protein is 4-hydroxy-tetrahydrodipicolinate reductase.